Here is a 335-residue protein sequence, read N- to C-terminus: Peroxidase 53 (335 aa).

The first 30 residues, 1-30, serve as a signal peptide directing secretion; sequence MAVTNLPTCDGLFIISLIVIVSSIFGTSSA. Residue Gln-31 is modified to Pyrrolidone carboxylic acid. Asn-33 and Asn-43 each carry an N-linked (GlcNAc...) asparagine glycan. Cystine bridges form between Cys-41–Cys-121, Cys-74–Cys-79, Cys-127–Cys-329, and Cys-206–Cys-238. The active-site Proton acceptor is the His-72. Ca(2+)-binding residues include Asp-73, Val-76, Gly-78, Asp-80, and Ser-82. Asn-165 carries N-linked (GlcNAc...) asparagine glycosylation. Pro-169 contributes to the substrate binding site. Residue Asn-177 is glycosylated (N-linked (GlcNAc...) asparagine). A heme b-binding site is contributed by His-199. Ca(2+) is bound at residue Thr-200. Residues Asn-215, Asn-227, and Asn-241 are each glycosylated (N-linked (GlcNAc...) asparagine). Residues Asp-251, Thr-254, and Asp-259 each contribute to the Ca(2+) site. An N-linked (GlcNAc...) asparagine glycan is attached at Asn-297.

The protein belongs to the peroxidase family. Classical plant (class III) peroxidase subfamily. Requires Ca(2+) as cofactor. It depends on heme b as a cofactor. In terms of tissue distribution, mainly expressed in roots.

It localises to the secreted. The enzyme catalyses 2 a phenolic donor + H2O2 = 2 a phenolic radical donor + 2 H2O. Its function is as follows. Removal of H(2)O(2), oxidation of toxic reductants, biosynthesis and degradation of lignin, suberization, auxin catabolism, response to environmental stresses such as wounding, pathogen attack and oxidative stress. These functions might be dependent on each isozyme/isoform in each plant tissue. Closely linked to lignin formation by showing monolignol substrate specificity. This chain is Peroxidase 53 (PER53), found in Arabidopsis thaliana (Mouse-ear cress).